The sequence spans 394 residues: Acid ceramidase (394 aa).

Positions methionine 1–alanine 18 are cleaved as a signal peptide. A disulfide bridge connects residues cysteine 30 and cysteine 339. Cysteine 142 acts as the Nucleophile in catalysis. Asparagine 172, asparagine 194, asparagine 258, asparagine 341, and asparagine 347 each carry an N-linked (GlcNAc...) asparagine glycan. Cysteine 387 and cysteine 391 form a disulfide bridge.

The protein belongs to the acid ceramidase family. As to quaternary structure, heterodimer; disulfide-linked. The heterodimer is composed of the disulfide-linked alpha and beta chains produced by autocatalytic cleavage of the precursor. N-glycosylated. In terms of processing, proteolytically cleaved into two chains alpha and beta that remain associated via a disulfide bond. Cleavage gives rise to a conformation change that activates the enzyme. The same catalytic Cys residue mediates the autoproteolytic cleavage and subsequent hydrolysis of lipid substrates. The beta chain may undergo an additional C-terminal processing. Widely expressed.

The protein resides in the lysosome. It is found in the secreted. The catalysed reaction is an N-acylsphing-4-enine + H2O = sphing-4-enine + a fatty acid. It catalyses the reaction N-dodecanoylsphing-4-enine + H2O = dodecanoate + sphing-4-enine. The enzyme catalyses N-(9Z-octadecenoyl)-sphing-4-enine + H2O = sphing-4-enine + (9Z)-octadecenoate. It carries out the reaction N-tetradecanoylsphing-4-enine + H2O = tetradecanoate + sphing-4-enine. The catalysed reaction is N-hexadecanoylsphing-4-enine + H2O = sphing-4-enine + hexadecanoate. It catalyses the reaction N-octadecanoylsphing-4-enine + H2O = sphing-4-enine + octadecanoate. The enzyme catalyses N-dodecanoyl-(4R)-hydroxysphinganine + H2O = (4R)-hydroxysphinganine + dodecanoate. It carries out the reaction N-(dodecanoyl)-sphinganine + H2O = dodecanoate + sphinganine. The catalysed reaction is N-(acetyl)-sphing-4-enine + H2O = sphing-4-enine + acetate. It catalyses the reaction N-(hexanoyl)sphing-4-enine + H2O = hexanoate + sphing-4-enine. The enzyme catalyses N-octanoylsphing-4-enine + H2O = octanoate + sphing-4-enine. It carries out the reaction N-dodecanoylethanolamine + H2O = dodecanoate + ethanolamine. Its pathway is lipid metabolism; sphingolipid metabolism. Lysosomal ceramidase that hydrolyzes sphingolipid ceramides into sphingosine and free fatty acids at acidic pH. Ceramides, sphingosine, and its phosphorylated form sphingosine-1-phosphate are bioactive lipids that mediate cellular signaling pathways regulating several biological processes including cell proliferation, apoptosis and differentiation. Has a higher catalytic efficiency towards C12-ceramides versus other ceramides. Also catalyzes the reverse reaction allowing the synthesis of ceramides from fatty acids and sphingosine. For the reverse synthetic reaction, the natural sphingosine D-erythro isomer is more efficiently utilized as a substrate compared to D-erythro-dihydrosphingosine and D-erythro-phytosphingosine, while the fatty acids with chain lengths of 12 or 14 carbons are the most efficiently used. Also has an N-acylethanolamine hydrolase activity. By regulating the levels of ceramides, sphingosine and sphingosine-1-phosphate in the epidermis, mediates the calcium-induced differentiation of epidermal keratinocytes. Also indirectly regulates tumor necrosis factor/TNF-induced apoptosis. By regulating the intracellular balance between ceramides and sphingosine, in adrenocortical cells, probably also acts as a regulator of steroidogenesis. The protein is Acid ceramidase of Mus musculus (Mouse).